Here is a 567-residue protein sequence, read N- to C-terminus: Oxygen-dependent choline dehydrogenase (567 aa).

Residue 6–35 coordinates FAD; sequence DYIIVGAGSAGNTLATRLTEDEGVTVLLLE. The active-site Proton acceptor is H475.

The protein belongs to the GMC oxidoreductase family. The cofactor is FAD.

It carries out the reaction choline + A = betaine aldehyde + AH2. It catalyses the reaction betaine aldehyde + NAD(+) + H2O = glycine betaine + NADH + 2 H(+). Its pathway is amine and polyamine biosynthesis; betaine biosynthesis via choline pathway; betaine aldehyde from choline (cytochrome c reductase route): step 1/1. Its function is as follows. Involved in the biosynthesis of the osmoprotectant glycine betaine. Catalyzes the oxidation of choline to betaine aldehyde and betaine aldehyde to glycine betaine at the same rate. The sequence is that of Oxygen-dependent choline dehydrogenase from Pseudomonas fluorescens (strain SBW25).